A 395-amino-acid chain; its full sequence is GPI-anchor transamidase (395 aa).

A signal peptide spans 1 to 27; that stretch reads MVGTWFLCRGFTTLAGLLLLPFGSLAA. The Lumenal segment spans residues 28–368; it reads SQIEDQAEQF…PKLKDWHPPG (341 aa). Residues aspartate 79, isoleucine 82, glutamate 118, and aspartate 120 each contribute to the Ca(2+) site. Histidine 164 serves as the catalytic Proton donor. Cysteine 206 acts as the Nucleophile; acyl-thioester intermediate in catalysis. Cysteine 206, serine 232, and serine 234 together coordinate a protein. The tract at residues 231-236 is autoinhibitory loop; that stretch reads DSLSHQ. A disulfide bond links cysteine 275 and cysteine 280. Residues 369 to 385 traverse the membrane as a helical segment; that stretch reads GFILGLWALIIMVFFKT. Topologically, residues 386-395 are cytoplasmic; it reads YGIKHMKFIF.

It belongs to the peptidase C13 family. As to quaternary structure, heteropentamer. Part of the GPI-anchor transamidase complex, consisting of PIGK, PIGT, PIGS, PIGU and GAA1. Interacts with GPAA1. Interacts with PIGT; this interaction, via a disulfide link, stabilizes the expression of GAA1 and PIGK and links them to PIGS. Post-translationally, the disulfide bond between PIGK/GPI8 and PIGT is important for normal enzyme activity.

It localises to the endoplasmic reticulum membrane. It functions in the pathway glycolipid biosynthesis; glycosylphosphatidylinositol-anchor biosynthesis. In the absence of proproteins substrates, exists in an inactive state with a disrupted catalytic site by an autoinhibitory loop. The binding of proprotein substrates, particularly the CSP region, to GPI-T triggers concerted conformational changes that alleviate the inhibition by the autoinhibitory loop. Meanwhile, proprotein residues near the omega- site induce the formation of a catalytic cleft for catalysis, following which the products are released and GPI-T reverts to the inactive state. In terms of biological role, catalytic subunit of the glycosylphosphatidylinositol-anchor (GPI-anchor) transamidase (GPI-T) complex that catalyzes the formation of the linkage between a proprotein and a GPI-anchor and participates in GPI anchored protein biosynthesis. Recognizes diverse proproteins at a C-terminal signal peptide (CSP) region that lacks consensus sequence and replaces it with a GPI-anchor via a transamidation reaction. Transamidation catalysis reaction follows a two-phase mechanism. In the acyl-enzyme phase, the carbonyl group of the proproteins's omega-site undergoes a nucleophilic attack forming an enzyme-substrate thioester bond. Followed by a general acid catalysis that allows CSP releasing, regenerating the carbonyl, and forming the acyl-enzyme intermediate. In the GPI-anchor attachment phase, the amino group of the GPI-anchor's ethanolamine phosphate, the one on third mannose (EtNP3), mediates a nucleophilic attack on the carbonyl of the acyl-enzyme intermediate, replacing the CSP, allowing GPI-anchor attachment to the omega-residue, therefore forming the product and freeing the enzyme. This is GPI-anchor transamidase from Sus scrofa (Pig).